Reading from the N-terminus, the 423-residue chain is Core protease OPG082 (423 aa).

Active-site residues include H241, D248, and C328.

The protein belongs to the peptidase C57 family.

The protein resides in the virion. Late protein responsible for processing most or all of the viral core and membrane proteins known to undergo morphogenesis-associated proteolysis. These proteolytic events are involved in the transformation of immature virions (IV) into mature virions (MV). Probably cleaves at least the OPG129, OPG136, OPG098, and OPG144 precursors preferentially at Ala-Gly-|-Ala motifs. Also seems to process Ala-Gly-|-Ser and Ala-Gly-|-Thr motifs. The polypeptide is Core protease OPG082 (OPG083) (Homo sapiens (Human)).